Here is a 255-residue protein sequence, read N- to C-terminus: Ribosomal RNA small subunit methyltransferase A (255 aa).

S-adenosyl-L-methionine is bound by residues Asn-12, Leu-14, Gly-39, Glu-60, Asp-84, and Asn-102.

The protein belongs to the class I-like SAM-binding methyltransferase superfamily. rRNA adenine N(6)-methyltransferase family. RsmA subfamily.

It localises to the cytoplasm. The catalysed reaction is adenosine(1518)/adenosine(1519) in 16S rRNA + 4 S-adenosyl-L-methionine = N(6)-dimethyladenosine(1518)/N(6)-dimethyladenosine(1519) in 16S rRNA + 4 S-adenosyl-L-homocysteine + 4 H(+). Its function is as follows. Specifically dimethylates two adjacent adenosines (A1518 and A1519) in the loop of a conserved hairpin near the 3'-end of 16S rRNA in the 30S particle. May play a critical role in biogenesis of 30S subunits. In Methylobacillus flagellatus (strain ATCC 51484 / DSM 6875 / VKM B-1610 / KT), this protein is Ribosomal RNA small subunit methyltransferase A.